Here is a 409-residue protein sequence, read N- to C-terminus: Argininosuccinate synthase (409 aa).

Residues 8–16 (AYSGGLDTS) and Ala34 each bind ATP. Tyr85 contacts L-citrulline. An ATP-binding site is contributed by Gly115. Residues Thr117, Asn121, and Asp122 each coordinate L-aspartate. Asn121 is a binding site for L-citrulline. Arg125, Ser178, Ser187, Glu268, and Tyr280 together coordinate L-citrulline.

It belongs to the argininosuccinate synthase family. Type 1 subfamily. Homotetramer.

Its subcellular location is the cytoplasm. It catalyses the reaction L-citrulline + L-aspartate + ATP = 2-(N(omega)-L-arginino)succinate + AMP + diphosphate + H(+). It participates in amino-acid biosynthesis; L-arginine biosynthesis; L-arginine from L-ornithine and carbamoyl phosphate: step 2/3. This chain is Argininosuccinate synthase, found in Thermotoga sp. (strain RQ2).